The chain runs to 327 residues: Lipoyl synthase (327 aa).

[4Fe-4S] cluster contacts are provided by Cys66, Cys71, Cys77, Cys92, Cys96, Cys99, and Ser306. The region spanning Phe78 to Thr295 is the Radical SAM core domain.

The protein belongs to the radical SAM superfamily. Lipoyl synthase family. It depends on [4Fe-4S] cluster as a cofactor.

The protein resides in the cytoplasm. It catalyses the reaction [[Fe-S] cluster scaffold protein carrying a second [4Fe-4S](2+) cluster] + N(6)-octanoyl-L-lysyl-[protein] + 2 oxidized [2Fe-2S]-[ferredoxin] + 2 S-adenosyl-L-methionine + 4 H(+) = [[Fe-S] cluster scaffold protein] + N(6)-[(R)-dihydrolipoyl]-L-lysyl-[protein] + 4 Fe(3+) + 2 hydrogen sulfide + 2 5'-deoxyadenosine + 2 L-methionine + 2 reduced [2Fe-2S]-[ferredoxin]. It functions in the pathway protein modification; protein lipoylation via endogenous pathway; protein N(6)-(lipoyl)lysine from octanoyl-[acyl-carrier-protein]: step 2/2. Functionally, catalyzes the radical-mediated insertion of two sulfur atoms into the C-6 and C-8 positions of the octanoyl moiety bound to the lipoyl domains of lipoate-dependent enzymes, thereby converting the octanoylated domains into lipoylated derivatives. This is Lipoyl synthase from Neisseria gonorrhoeae (strain ATCC 700825 / FA 1090).